Reading from the N-terminus, the 415-residue chain is Gamma-glutamyl phosphate reductase (415 aa).

It belongs to the gamma-glutamyl phosphate reductase family.

The protein resides in the cytoplasm. It carries out the reaction L-glutamate 5-semialdehyde + phosphate + NADP(+) = L-glutamyl 5-phosphate + NADPH + H(+). It functions in the pathway amino-acid biosynthesis; L-proline biosynthesis; L-glutamate 5-semialdehyde from L-glutamate: step 2/2. Its function is as follows. Catalyzes the NADPH-dependent reduction of L-glutamate 5-phosphate into L-glutamate 5-semialdehyde and phosphate. The product spontaneously undergoes cyclization to form 1-pyrroline-5-carboxylate. This chain is Gamma-glutamyl phosphate reductase, found in Mycolicibacterium gilvum (strain PYR-GCK) (Mycobacterium gilvum (strain PYR-GCK)).